We begin with the raw amino-acid sequence, 631 residues long: UvrABC system protein C (631 aa).

Residues 26–105 (SSPGVYQFKN…IKELKPRYNV (80 aa)) enclose the GIY-YIG domain. The UVR domain maps to 219 to 254 (SATIRSLNERMLSFAKELKFEQAAELKTQIDSLKRY).

The protein belongs to the UvrC family. As to quaternary structure, interacts with UvrB in an incision complex.

It localises to the cytoplasm. The UvrABC repair system catalyzes the recognition and processing of DNA lesions. UvrC both incises the 5' and 3' sides of the lesion. The N-terminal half is responsible for the 3' incision and the C-terminal half is responsible for the 5' incision. This Chlorobium phaeobacteroides (strain DSM 266 / SMG 266 / 2430) protein is UvrABC system protein C.